The primary structure comprises 234 residues: Large ribosomal subunit protein uL1 (234 aa).

The protein belongs to the universal ribosomal protein uL1 family. In terms of assembly, part of the 50S ribosomal subunit.

In terms of biological role, binds directly to 23S rRNA. The L1 stalk is quite mobile in the ribosome, and is involved in E site tRNA release. Functionally, protein L1 is also a translational repressor protein, it controls the translation of the L11 operon by binding to its mRNA. The chain is Large ribosomal subunit protein uL1 from Baumannia cicadellinicola subsp. Homalodisca coagulata.